We begin with the raw amino-acid sequence, 305 residues long: Ribonuclease BN (305 aa).

The Zn(2+) site is built by histidine 64, histidine 66, aspartate 68, histidine 69, histidine 141, aspartate 212, and histidine 270. Residue aspartate 68 is the Proton acceptor of the active site.

It belongs to the RNase Z family. RNase BN subfamily. As to quaternary structure, homodimer. Zn(2+) serves as cofactor.

Zinc phosphodiesterase, which has both exoribonuclease and endoribonuclease activities. The sequence is that of Ribonuclease BN from Salmonella gallinarum (strain 287/91 / NCTC 13346).